The sequence spans 21 residues: Cupiennin-6a (21 aa).

S21 carries the serine amide modification.

In terms of tissue distribution, expressed by the venom gland.

Its subcellular location is the secreted. The polypeptide is Cupiennin-6a (Cupiennius salei (American wandering spider)).